We begin with the raw amino-acid sequence, 556 residues long: Urocanate hydratase (556 aa).

NAD(+)-binding positions include G53–G54, Q131, G177–G179, E197, N243–A244, Q264–H268, Y274–L275, and Y323. C411 is a catalytic residue. G493 contributes to the NAD(+) binding site.

The protein belongs to the urocanase family. It depends on NAD(+) as a cofactor.

The protein localises to the cytoplasm. The enzyme catalyses 4-imidazolone-5-propanoate = trans-urocanate + H2O. Its pathway is amino-acid degradation; L-histidine degradation into L-glutamate; N-formimidoyl-L-glutamate from L-histidine: step 2/3. Catalyzes the conversion of urocanate to 4-imidazolone-5-propionate. In Pseudomonas fluorescens (strain SBW25), this protein is Urocanate hydratase.